Consider the following 211-residue polypeptide: 2,3-bisphosphoglycerate-dependent phosphoglycerate mutase (211 aa).

Residues 9–16 (RHGQSDWN), 22–23 (TG), R61, 88–91 (ERDY), K99, 115–116 (RR), and 159–160 (GN) contribute to the substrate site. Residue H10 is the Tele-phosphohistidine intermediate of the active site. Catalysis depends on E88, which acts as the Proton donor/acceptor.

It belongs to the phosphoglycerate mutase family. BPG-dependent PGAM subfamily. In terms of assembly, homodimer.

It catalyses the reaction (2R)-2-phosphoglycerate = (2R)-3-phosphoglycerate. Its pathway is carbohydrate degradation; glycolysis; pyruvate from D-glyceraldehyde 3-phosphate: step 3/5. In terms of biological role, catalyzes the interconversion of 2-phosphoglycerate and 3-phosphoglycerate. This Rhizobium meliloti (strain 1021) (Ensifer meliloti) protein is 2,3-bisphosphoglycerate-dependent phosphoglycerate mutase.